The chain runs to 471 residues: Argininosuccinate lyase (471 aa).

The protein belongs to the lyase 1 family. Argininosuccinate lyase subfamily.

Its subcellular location is the cytoplasm. The catalysed reaction is 2-(N(omega)-L-arginino)succinate = fumarate + L-arginine. It participates in amino-acid biosynthesis; L-arginine biosynthesis; L-arginine from L-ornithine and carbamoyl phosphate: step 3/3. The protein is Argininosuccinate lyase of Cereibacter sphaeroides (strain ATCC 17023 / DSM 158 / JCM 6121 / CCUG 31486 / LMG 2827 / NBRC 12203 / NCIMB 8253 / ATH 2.4.1.) (Rhodobacter sphaeroides).